Consider the following 473-residue polypeptide: Vasculin (473 aa).

Disordered stretches follow at residues 1-26 (MAQH…SLNF), 44-163 (RRRH…EYPP), 196-240 (SQPV…SFPH), 258-286 (NFSP…QQPR), and 305-342 (LKRD…QERD). Residue S49 is modified to Phosphoserine. The residue at position 87 (R87) is an Omega-N-methylarginine. Over residues 93–107 (GSSRSRSSIFHSGKS) the composition is skewed to low complexity. Residues 119-133 (ETGRKDDKRERKQFE) show a composition bias toward basic and acidic residues. Phosphoserine occurs at positions 274, 276, 322, and 381. Residues 305-329 (LKRDRVEEEHEDESHVGSEKDDDSF) are compositionally biased toward basic and acidic residues. The interval 444–473 (GPWKNSTFKPTIENDDTETSSSDTSDDDDV) is disordered. Over residues 456 to 473 (ENDDTETSSSDTSDDDDV) the composition is skewed to acidic residues.

Belongs to the vasculin family. In terms of assembly, interacts with GTF2B, GTF2F2, RNA polymerase II and TBP.

It localises to the nucleus. Its function is as follows. Functions as a GC-rich promoter-specific transactivating transcription factor. The protein is Vasculin (GPBP1) of Bos taurus (Bovine).